Consider the following 226-residue polypeptide: 7-cyano-7-deazaguanine synthase (226 aa).

An ATP-binding site is contributed by 9-19 (LSGGLDSATVL). Residues C189, C199, C202, and C205 each coordinate Zn(2+).

Belongs to the QueC family. Requires Zn(2+) as cofactor.

The enzyme catalyses 7-carboxy-7-deazaguanine + NH4(+) + ATP = 7-cyano-7-deazaguanine + ADP + phosphate + H2O + H(+). It participates in purine metabolism; 7-cyano-7-deazaguanine biosynthesis. In terms of biological role, catalyzes the ATP-dependent conversion of 7-carboxy-7-deazaguanine (CDG) to 7-cyano-7-deazaguanine (preQ(0)). This is 7-cyano-7-deazaguanine synthase from Cupriavidus pinatubonensis (strain JMP 134 / LMG 1197) (Cupriavidus necator (strain JMP 134)).